Here is a 309-residue protein sequence, read N- to C-terminus: MRVREIKNLLDNYNKQIGVSVSHVPHSNRKTVLNLQKSLDAINELSKLGFLDDDIERFKDLGSIYYSRVPEDKIEVDNHIANQITNHIKIVKEKLRGFGILIDQSVSDQNENVISVKLPQYNSLEELEKFIKKLNNAFQNGITLEEINGHYKLQGFDTGSMWIDILVNSSAAVIFVGQLIDAAINISKRSQELLITKANIEKLALQNEQLKLQVETSKALLDGIEKGIDTITDAEIKNVTEGANYSTESIGHIKQSVKIFAELLHEGTQFHPSLDAPSETVEAFPEPQKNLEEPQQLLETLADNLPEQE.

The tract at residues 272–291 (PSLDAPSETVEAFPEPQKNL) is disordered.

This is an uncharacterized protein from Bacillus subtilis (strain 168).